Reading from the N-terminus, the 394-residue chain is GDP-mannose transporter (394 aa).

Residues 1 to 56 lie on the Cytoplasmic side of the membrane; sequence MSNKKNEDIEMRAVEGANDFGGEKDPFLGRNSPVLRPRGREPTASAYFGKLDNSPG. The helical transmembrane segment at 57–77 threads the bilayer; the sequence is ASIIAYCLSSISMTVVNKYVV. Topologically, residues 78–81 are lumenal; sequence SGES. The helical transmembrane segment at 82–102 threads the bilayer; that stretch reads WNLNFFYLGVQSLVCTIAILL. The Cytoplasmic portion of the chain corresponds to 103–122; that stretch reads SRQTGLIKNLAPFDSNKAKR. Residues 123-145 traverse the membrane as a helical segment; the sequence is WFPVSLLLVSMIYTGANALQYLS. Residues 146 to 150 lie on the Lumenal side of the membrane; the sequence is VPVYT. A helical membrane pass occupies residues 151-168; the sequence is IFKNLTIIVIAYGEVLWF. The Cytoplasmic portion of the chain corresponds to 169 to 174; it reads GGSVTP. Residues 175–199 traverse the membrane as a helical segment; it reads LMLLSFGLMVLSSVVAAWADIQAAI. Residues 200 to 207 are Lumenal-facing; sequence DGVGHSAE. The helical transmembrane segment at 208 to 228 threads the bilayer; the sequence is TSAALATLNAGYAWMGLNVVC. Topologically, residues 229–249 are cytoplasmic; the sequence is TSSYLLGMRKVIKKMNFKDYD. Residues 250 to 270 form a helical membrane-spanning segment; that stretch reads SMFYNNLLTIPVLVVCSLLVE. Over 271-288 the chain is Lumenal; sequence DWSSENLAKNFPIETRNK. The helical transmembrane segment at 289-309 threads the bilayer; sequence LMVGMIYSGLAAIFISYCSAW. The Cytoplasmic segment spans residues 310–317; the sequence is CIRVTSST. A helical transmembrane segment spans residues 318-338; sequence TYSMVGALNKLPIAISGLIFF. At 339-341 the chain is on the lumenal side; the sequence is DAP. A helical membrane pass occupies residues 342–362; sequence ITFGSITAIAVGFVSGLVFAW. Residues 363 to 394 are Cytoplasmic-facing; that stretch reads AKVRQKAQEAGLLPTTKPTMSASAQSNRDANS.

This sequence belongs to the TPT transporter family. SLC35D subfamily. Homooligomer.

It is found in the golgi apparatus membrane. The protein resides in the cytoplasmic vesicle membrane. The protein localises to the endoplasmic reticulum membrane. Its function is as follows. Involved in the import of GDP-mannose from the cytoplasm into the Golgi lumen. This Chaetomium globosum (strain ATCC 6205 / CBS 148.51 / DSM 1962 / NBRC 6347 / NRRL 1970) (Soil fungus) protein is GDP-mannose transporter (VRG4).